The following is a 321-amino-acid chain: Cathepsin O (321 aa).

The N-terminal stretch at 1-23 (MDVRALPWLPWLLWLLCRGGGDA) is a signal peptide. Positions 24–107 (DSRAPFTPTW…EVHMSIPNVS (84 aa)) are cleaved as a propeptide — activation peptide. N-linked (GlcNAc...) asparagine glycans are attached at residues asparagine 62 and asparagine 105. 3 cysteine pairs are disulfide-bonded: cysteine 129–cysteine 170, cysteine 163–cysteine 204, and cysteine 262–cysteine 310. Residue cysteine 132 is part of the active site. Residues histidine 269 and asparagine 289 contribute to the active site.

This sequence belongs to the peptidase C1 family. As to expression, expressed in all tissues examined. High levels seen in the ovary, kidney and placenta while low levels seen in thymus and skeletal muscle.

It localises to the lysosome. It catalyses the reaction The recombinant human enzyme hydrolyzes synthetic endopeptidase substrates including Z-Phe-Arg-NHMec and Z-Arg-Arg-NHMec.. Proteolytic enzyme possibly involved in normal cellular protein degradation and turnover. The sequence is that of Cathepsin O (CTSO) from Homo sapiens (Human).